The sequence spans 248 residues: uncharacterized protein (248 aa).

A helical membrane pass occupies residues L30–A50. Disordered regions lie at residues N59–P91 and T208–R248. 2 stretches are compositionally biased toward polar residues: residues E210–N220 and S239–R248.

It localises to the membrane. This is an uncharacterized protein from Caenorhabditis elegans.